The sequence spans 501 residues: Ribose import ATP-binding protein RbsA (501 aa).

ABC transporter domains are found at residues 8-245 and 255-500; these read LKMV…VGRT and VKKG…VGIN. 40–47 is an ATP binding site; the sequence is GENGAGKS.

The protein belongs to the ABC transporter superfamily. Ribose importer (TC 3.A.1.2.1) family. In terms of assembly, the complex is composed of an ATP-binding protein (RbsA), two transmembrane proteins (RbsC) and a solute-binding protein (RbsB).

Its subcellular location is the cell membrane. The catalysed reaction is D-ribose(out) + ATP + H2O = D-ribose(in) + ADP + phosphate + H(+). Its function is as follows. Part of the ABC transporter complex RbsABC involved in ribose import. Responsible for energy coupling to the transport system. The protein is Ribose import ATP-binding protein RbsA of Clostridium perfringens (strain SM101 / Type A).